Here is a 131-residue protein sequence, read N- to C-terminus: Lymphocyte antigen 6C2 (131 aa).

The signal sequence occupies residues 1–26; sequence MDSTHATKSCLLILLVALLCAGRAQG. Residues 27–116 enclose the UPAR/Ly6 domain; the sequence is LQCYECYGVP…TAGSTWTMAG (90 aa). Intrachain disulfides connect Cys29-Cys53, Cys32-Cys41, Cys46-Cys74, Cys78-Cys95, and Cys96-Cys101. Gly109 carries GPI-anchor amidated glycine lipidation. The propeptide at 110–131 is removed in mature form; the sequence is STWTMAGVLLFSLSSVILQTLL.

It is found in the cell membrane. This Mus musculus (Mouse) protein is Lymphocyte antigen 6C2 (Ly6c2).